The following is a 518-amino-acid chain: Glutamate--cysteine ligase (518 aa).

This sequence belongs to the glutamate--cysteine ligase type 1 family. Type 1 subfamily.

It carries out the reaction L-cysteine + L-glutamate + ATP = gamma-L-glutamyl-L-cysteine + ADP + phosphate + H(+). Its pathway is sulfur metabolism; glutathione biosynthesis; glutathione from L-cysteine and L-glutamate: step 1/2. In Citrobacter koseri (strain ATCC BAA-895 / CDC 4225-83 / SGSC4696), this protein is Glutamate--cysteine ligase.